Reading from the N-terminus, the 1002-residue chain is Mitogen-activated protein kinase kinase kinase 21 (1002 aa).

Positions 1 to 26 are disordered; the sequence is MALPVAEGTADTPLSPARDDSGSTSS. The region spanning 24-88 is the SH3 domain; sequence TSSGMWAALY…PASYVAPCGP (65 aa). Residues 110 to 390 enclose the Protein kinase domain; the sequence is LELKELIGAG…QLTAIEEAVL (281 aa). Residues 116–124 and Lys-137 each bind ATP; that span reads IGAGGFGQV. Asp-247 serves as the catalytic Proton acceptor. Thr-283 is modified (phosphothreonine; by autocatalysis). A Phosphoserine; by autocatalysis and MAP4K1 modification is found at Ser-287. Leucine-zipper regions lie at residues 409 to 430 and 444 to 466; these read IQQM…EEEL and LRRR…LNVL. 6 disordered regions span residues 508–531, 574–604, 640–689, 721–778, 797–823, and 878–899; these read TVQA…PPGS, GCTW…NSPW, HRKP…VGAP, AQAP…SHSS, LGNA…SGCE, and QSAP…RDLA. Ser-512, Ser-527, and Ser-531 each carry phosphoserine. Residue Thr-576 is modified to Phosphothreonine. The segment covering 584–596 has biased composition (basic and acidic residues); that stretch reads TKERPEGRERVRP. Position 598 is a phosphoserine (Ser-598). A compositionally biased stretch (basic and acidic residues) spans 661–677; it reads DSQREDSSEAESREEGS. Composition is skewed to low complexity over residues 740–758 and 766–778; these read QPAS…QPSA and STLL…SHSS.

The protein belongs to the protein kinase superfamily. STE Ser/Thr protein kinase family. MAP kinase kinase kinase subfamily. In terms of assembly, homodimer. Interacts with TLR4. It depends on Mg(2+) as a cofactor. Post-translationally, autophosphorylation on serine and threonine residues within the activation loop plays a role in enzyme activation.

It catalyses the reaction L-seryl-[protein] + ATP = O-phospho-L-seryl-[protein] + ADP + H(+). The catalysed reaction is L-threonyl-[protein] + ATP = O-phospho-L-threonyl-[protein] + ADP + H(+). Its activity is regulated as follows. Homodimerization via the leucine zipper domains is required for autophosphorylation and subsequent activation. In terms of biological role, negative regulator of TLR4 signaling. Does not activate JNK1/MAPK8 pathway, p38/MAPK14, nor ERK2/MAPK1 pathways. This chain is Mitogen-activated protein kinase kinase kinase 21 (Map3k21), found in Mus musculus (Mouse).